A 159-amino-acid polypeptide reads, in one-letter code: Globin-like protein (159 aa).

The 152-residue stretch at 1 to 152 folds into the Globin domain; it reads MSMNRQEISD…FNAESQTHLK (152 aa). Histidine 101 provides a ligand contact to heme.

It belongs to the globin family. Homodimer. Expressed mainly in a subset of neuronal cells and in head muscular tissue.

The protein resides in the cytoplasm. Functionally, may be a globin and may play a role in oxygen transport. This chain is Globin-like protein (glb-1), found in Caenorhabditis elegans.